We begin with the raw amino-acid sequence, 382 residues long: D-galactonate dehydratase (382 aa).

Residue Asp183 participates in Mg(2+) binding. His185 (proton donor) is an active-site residue. 2 residues coordinate Mg(2+): Glu209 and Glu235. His285 acts as the Proton acceptor in catalysis.

It belongs to the mandelate racemase/muconate lactonizing enzyme family. GalD subfamily. Requires Mg(2+) as cofactor.

It catalyses the reaction D-galactonate = 2-dehydro-3-deoxy-D-galactonate + H2O. It functions in the pathway carbohydrate acid metabolism; D-galactonate degradation; D-glyceraldehyde 3-phosphate and pyruvate from D-galactonate: step 1/3. In terms of biological role, catalyzes the dehydration of D-galactonate to 2-keto-3-deoxy-D-galactonate. In Salmonella dublin (strain CT_02021853), this protein is D-galactonate dehydratase.